The chain runs to 645 residues: DNA mismatch repair protein MutL (645 aa).

Residues 371–403 (VHDQKDKNHDVESHKNNLDSTSSTNNESTEVSN) are disordered. Over residues 372 to 387 (HDQKDKNHDVESHKNN) the composition is skewed to basic and acidic residues. The segment covering 390–402 (STSSTNNESTEVS) has biased composition (low complexity).

The protein belongs to the DNA mismatch repair MutL/HexB family.

Its function is as follows. This protein is involved in the repair of mismatches in DNA. It is required for dam-dependent methyl-directed DNA mismatch repair. May act as a 'molecular matchmaker', a protein that promotes the formation of a stable complex between two or more DNA-binding proteins in an ATP-dependent manner without itself being part of a final effector complex. The protein is DNA mismatch repair protein MutL of Staphylococcus epidermidis (strain ATCC 35984 / DSM 28319 / BCRC 17069 / CCUG 31568 / BM 3577 / RP62A).